Here is a 137-residue protein sequence, read N- to C-terminus: Acetyltransferase Atu2258 (137 aa).

Positions 1-137 constitute an N-acetyltransferase domain; that stretch reads MNFVLSDVAD…QSITWLEKRF (137 aa). CoA is bound by residues 66 to 68, Gly-74, and 108 to 110; these read LFV and RTY.

Its function is as follows. Catalyzes the transfer of an acetyl group from acetyl coenzyme A (AcCoA) to an acceptor substrate and releases both CoA and the acetylated product. It prefers glucosamine 6-phosphate or dopamine. It can also use the thialysine, N(8)-acetylspermidine, chloramphenicol, puromycin, polymyxin B, and 4-aminobutyrate ethyl ester. The polypeptide is Acetyltransferase Atu2258 (Agrobacterium fabrum (strain C58 / ATCC 33970) (Agrobacterium tumefaciens (strain C58))).